Here is a 376-residue protein sequence, read N- to C-terminus: MSSQPKPRVAVVFGGRSSEHAISCVTAAGVLAALDGDVYDVVPIGITTTGRWVLVEDPARFELTDGALPEVPATGTPVGLPLDVDTKALQRLGGAPGAPALAELGEVDVVLPLLHGPFGEDGTLQGLLELSDTRYVGSGVLASAAGMDKQVMKLLLAGQGLPVGPWTSFRARRWDTDRDGVVAEVEALGYPVFVKPARAGSSIGITRVTSREGLAAAVAEAVSHDPKVVVEAALVGREIECGVLEDLDGGEPLTSLPGEVEVVGGHDFYDFEAKYLDSGNVRLTCPADLPDDVVAAVRRTAVRVFEAMGAEGLARVDLFVDPARGEDGIVVNEINTMPGFTPFSMYPRMWAATGVDYPELVHRLIQLALRRPTGLR.

The ATP-grasp domain occupies 153–366 (KLLLAGQGLP…YPELVHRLIQ (214 aa)). 185-240 (VEALGYPVFVKPARAGSSIGITRVTSREGLAAAVAEAVSHDPKVVVEAALVGREIE) is a binding site for ATP. Asp-317, Glu-333, and Asn-335 together coordinate Mg(2+).

It belongs to the D-alanine--D-alanine ligase family. Requires Mg(2+) as cofactor. Mn(2+) serves as cofactor.

It is found in the cytoplasm. The catalysed reaction is 2 D-alanine + ATP = D-alanyl-D-alanine + ADP + phosphate + H(+). The protein operates within cell wall biogenesis; peptidoglycan biosynthesis. Functionally, cell wall formation. This chain is D-alanine--D-alanine ligase, found in Kineococcus radiotolerans (strain ATCC BAA-149 / DSM 14245 / SRS30216).